Consider the following 26-residue polypeptide: Coenzyme PQQ synthesis protein A (26 aa).

The segment at residues 16–20 is a cross-link (pyrroloquinoline quinone (Glu-Tyr)); it reads EINSY.

Belongs to the PqqA family.

It participates in cofactor biosynthesis; pyrroloquinoline quinone biosynthesis. Required for coenzyme pyrroloquinoline quinone (PQQ) biosynthesis. PQQ is probably formed by cross-linking a specific glutamate to a specific tyrosine residue and excising these residues from the peptide. This Gluconacetobacter diazotrophicus (strain ATCC 49037 / DSM 5601 / CCUG 37298 / CIP 103539 / LMG 7603 / PAl5) protein is Coenzyme PQQ synthesis protein A.